The sequence spans 390 residues: Protein phosphatase 1B (390 aa).

A compositionally biased stretch (basic and acidic residues) spans 1-14 (MGAFLDKPKTEKHN). The disordered stretch occupies residues 1–20 (MGAFLDKPKTEKHNAHGAGN). Gly2 carries N-myristoyl glycine lipidation. Lys12 is covalently cross-linked (Glycyl lysine isopeptide (Lys-Gly) (interchain with G-Cter in ISG15)). The region spanning 23–295 (RYGLSSMQGW…DNMSIVLVCF (273 aa)) is the PPM-type phosphatase domain. Residues Asp60, Gly61, Asp243, and Asp286 each contribute to the Mn(2+) site. Positions 371 to 390 (NPNKDNDGGAGDLEDSLVAL) are disordered. Ser386 carries the post-translational modification Phosphoserine.

This sequence belongs to the PP2C family. In terms of assembly, monomer. Interacts with PAK6. Interacts with the phosphorylated form of IKBKB/IKKB. Mg(2+) serves as cofactor. It depends on Mn(2+) as a cofactor. Post-translationally, isgylation negatively regulates its activity. In terms of processing, N-myristoylation is essential for the recognition of its substrates for dephosphorylation.

The protein resides in the cytoplasm. It localises to the cytosol. It is found in the membrane. It catalyses the reaction O-phospho-L-seryl-[protein] + H2O = L-seryl-[protein] + phosphate. The enzyme catalyses O-phospho-L-threonyl-[protein] + H2O = L-threonyl-[protein] + phosphate. Functionally, enzyme with a broad specificity. Dephosphorylates PRKAA1 and PRKAA2. Inhibits TBK1-mediated antiviral signaling by dephosphorylating it at 'Ser-172'. Plays an important role in the termination of TNF-alpha-mediated NF-kappa-B activation through dephosphorylating and inactivating IKBKB/IKKB. This chain is Protein phosphatase 1B (Ppm1b), found in Rattus norvegicus (Rat).